Consider the following 177-residue polypeptide: Adenine phosphoribosyltransferase (177 aa).

It belongs to the purine/pyrimidine phosphoribosyltransferase family. As to quaternary structure, homodimer.

It is found in the cytoplasm. The enzyme catalyses AMP + diphosphate = 5-phospho-alpha-D-ribose 1-diphosphate + adenine. The protein operates within purine metabolism; AMP biosynthesis via salvage pathway; AMP from adenine: step 1/1. Functionally, catalyzes a salvage reaction resulting in the formation of AMP, that is energically less costly than de novo synthesis. The polypeptide is Adenine phosphoribosyltransferase (Leptospira borgpetersenii serovar Hardjo-bovis (strain JB197)).